The primary structure comprises 67 residues: Large ribosomal subunit protein bL31 (67 aa).

Zn(2+) contacts are provided by cysteine 16, cysteine 18, cysteine 36, and cysteine 39.

It belongs to the bacterial ribosomal protein bL31 family. Type A subfamily. As to quaternary structure, part of the 50S ribosomal subunit. Requires Zn(2+) as cofactor.

Binds the 23S rRNA. This chain is Large ribosomal subunit protein bL31, found in Treponema denticola (strain ATCC 35405 / DSM 14222 / CIP 103919 / JCM 8153 / KCTC 15104).